Consider the following 401-residue polypeptide: Argininosuccinate synthase (401 aa).

9-17 (AYSGGLDTS) contacts ATP. Residue Tyr-87 participates in L-citrulline binding. Gly-117 serves as a coordination point for ATP. L-aspartate is bound by residues Thr-119, Asn-123, and Asp-124. Asn-123 contacts L-citrulline. L-citrulline-binding residues include Arg-127, Ser-176, Ser-185, Glu-261, and Tyr-273.

It belongs to the argininosuccinate synthase family. Type 1 subfamily. As to quaternary structure, homotetramer.

The protein localises to the cytoplasm. It catalyses the reaction L-citrulline + L-aspartate + ATP = 2-(N(omega)-L-arginino)succinate + AMP + diphosphate + H(+). Its pathway is amino-acid biosynthesis; L-arginine biosynthesis; L-arginine from L-ornithine and carbamoyl phosphate: step 2/3. The protein is Argininosuccinate synthase of Prosthecochloris aestuarii (strain DSM 271 / SK 413).